The primary structure comprises 309 residues: Ribosomal RNA large subunit methyltransferase F (309 aa).

A disordered region spans residues 1–21; that stretch reads MASQHDKKSVQSGLLHPRNPH.

This sequence belongs to the methyltransferase superfamily. METTL16/RlmF family.

The protein localises to the cytoplasm. It catalyses the reaction adenosine(1618) in 23S rRNA + S-adenosyl-L-methionine = N(6)-methyladenosine(1618) in 23S rRNA + S-adenosyl-L-homocysteine + H(+). Functionally, specifically methylates the adenine in position 1618 of 23S rRNA. The polypeptide is Ribosomal RNA large subunit methyltransferase F (Desulfotalea psychrophila (strain LSv54 / DSM 12343)).